A 325-amino-acid polypeptide reads, in one-letter code: Tetraacyldisaccharide 4'-kinase (325 aa).

An ATP-binding site is contributed by 53-60 (SVGGNGKT).

The protein belongs to the LpxK family.

It catalyses the reaction a lipid A disaccharide + ATP = a lipid IVA + ADP + H(+). It functions in the pathway glycolipid biosynthesis; lipid IV(A) biosynthesis; lipid IV(A) from (3R)-3-hydroxytetradecanoyl-[acyl-carrier-protein] and UDP-N-acetyl-alpha-D-glucosamine: step 6/6. In terms of biological role, transfers the gamma-phosphate of ATP to the 4'-position of a tetraacyldisaccharide 1-phosphate intermediate (termed DS-1-P) to form tetraacyldisaccharide 1,4'-bis-phosphate (lipid IVA). The polypeptide is Tetraacyldisaccharide 4'-kinase (Actinobacillus succinogenes (strain ATCC 55618 / DSM 22257 / CCUG 43843 / 130Z)).